A 289-amino-acid chain; its full sequence is Dihydropteroate synthase (289 aa).

The region spanning 28 to 282 (TYVMGILNTT…DVEAMAQICK (255 aa)) is the Pterin-binding domain. Asn35 lines the Mg(2+) pocket. Residues Thr75, Asp109, Asn128, Asp199, Lys235, and 270–272 (RVH) contribute to the (7,8-dihydropterin-6-yl)methyl diphosphate site.

It belongs to the DHPS family. Mg(2+) serves as cofactor.

The catalysed reaction is (7,8-dihydropterin-6-yl)methyl diphosphate + 4-aminobenzoate = 7,8-dihydropteroate + diphosphate. Its pathway is cofactor biosynthesis; tetrahydrofolate biosynthesis; 7,8-dihydrofolate from 2-amino-4-hydroxy-6-hydroxymethyl-7,8-dihydropteridine diphosphate and 4-aminobenzoate: step 1/2. Functionally, catalyzes the condensation of para-aminobenzoate (pABA) with 6-hydroxymethyl-7,8-dihydropterin diphosphate (DHPt-PP) to form 7,8-dihydropteroate (H2Pte), the immediate precursor of folate derivatives. This is Dihydropteroate synthase (folP) from Synechocystis sp. (strain ATCC 27184 / PCC 6803 / Kazusa).